The chain runs to 249 residues: Small ribosomal subunit protein uS2 (249 aa).

The protein belongs to the universal ribosomal protein uS2 family.

The protein is Small ribosomal subunit protein uS2 of Bordetella parapertussis (strain 12822 / ATCC BAA-587 / NCTC 13253).